The chain runs to 176 residues: Protein MOTHER of FT and TFL1 homolog 1 (176 aa).

This sequence belongs to the phosphatidylethanolamine-binding protein family.

Functionally, may form complexes with phosphorylated ligands by interfering with kinases and their effectors. The protein is Protein MOTHER of FT and TFL1 homolog 1 of Oryza sativa subsp. japonica (Rice).